The sequence spans 488 residues: H2.0-like homeobox protein (488 aa).

Disordered regions lie at residues 118-173 (AYHH…SSKD) and 331-488 (WRHS…LGCL). 2 stretches are compositionally biased toward low complexity: residues 125–135 (QQQQQQQQPQQ) and 158–171 (PNPHHSGSAPAPSS). The segment at residues 276–335 (RSWSRAVFSNLQRKGLEKRFEIQKYVTKPDRKQLAAMLGLTDAQVKVWFQNRRMKWRHSK) is a DNA-binding region (homeobox). 2 stretches are compositionally biased toward basic and acidic residues: residues 334-349 (SKEAQAQKDKDKEAGE) and 363-372 (DERSPSRSEG). Over residues 373–383 (EAESESSDSES) the composition is skewed to acidic residues. Basic and acidic residues predominate over residues 390–401 (DTERTEGSERSL). A compositionally biased stretch (gly residues) spans 422–432 (GSGGSSGGGGN). Over residues 433 to 454 (SFSFSSASSLSSSSTSAGCASS) the composition is skewed to low complexity.

This sequence belongs to the H2.0 homeobox family. As to expression, low level in normal B and T-cells, high level in activated lymphocytes and monocytes. Also found in thymus, tonsil, bone marrow, developing vessels, and fetal brain.

It is found in the nucleus. Functionally, transcription factor required for TBX21/T-bet-dependent maturation of Th1 cells as well as maintenance of Th1-specific gene expression. Involved in embryogenesis and hematopoiesis. This is H2.0-like homeobox protein (HLX) from Homo sapiens (Human).